A 458-amino-acid chain; its full sequence is UDP-N-acetylmuramate--L-alanine ligase (458 aa).

118-124 (GTHGKTT) contributes to the ATP binding site.

Belongs to the MurCDEF family.

Its subcellular location is the cytoplasm. The enzyme catalyses UDP-N-acetyl-alpha-D-muramate + L-alanine + ATP = UDP-N-acetyl-alpha-D-muramoyl-L-alanine + ADP + phosphate + H(+). It participates in cell wall biogenesis; peptidoglycan biosynthesis. Functionally, cell wall formation. This chain is UDP-N-acetylmuramate--L-alanine ligase, found in Clostridium botulinum (strain ATCC 19397 / Type A).